We begin with the raw amino-acid sequence, 377 residues long: Ribosomal RNA large subunit methyltransferase G (377 aa).

This sequence belongs to the methyltransferase superfamily. RlmG family.

Its subcellular location is the cytoplasm. The catalysed reaction is guanosine(1835) in 23S rRNA + S-adenosyl-L-methionine = N(2)-methylguanosine(1835) in 23S rRNA + S-adenosyl-L-homocysteine + H(+). Functionally, specifically methylates the guanine in position 1835 (m2G1835) of 23S rRNA. The sequence is that of Ribosomal RNA large subunit methyltransferase G from Shewanella sp. (strain ANA-3).